The sequence spans 412 residues: Serine hydroxymethyltransferase (412 aa).

(6S)-5,6,7,8-tetrahydrofolate-binding positions include L117 and 121 to 123 (GHL). K226 bears the N6-(pyridoxal phosphate)lysine mark. 349–351 (SPF) contacts (6S)-5,6,7,8-tetrahydrofolate.

This sequence belongs to the SHMT family. Homodimer. It depends on pyridoxal 5'-phosphate as a cofactor.

The protein localises to the cytoplasm. It carries out the reaction (6R)-5,10-methylene-5,6,7,8-tetrahydrofolate + glycine + H2O = (6S)-5,6,7,8-tetrahydrofolate + L-serine. Its pathway is one-carbon metabolism; tetrahydrofolate interconversion. It participates in amino-acid biosynthesis; glycine biosynthesis; glycine from L-serine: step 1/1. Its function is as follows. Catalyzes the reversible interconversion of serine and glycine with tetrahydrofolate (THF) serving as the one-carbon carrier. This reaction serves as the major source of one-carbon groups required for the biosynthesis of purines, thymidylate, methionine, and other important biomolecules. Also exhibits THF-independent aldolase activity toward beta-hydroxyamino acids, producing glycine and aldehydes, via a retro-aldol mechanism. This is Serine hydroxymethyltransferase from Halothermothrix orenii (strain H 168 / OCM 544 / DSM 9562).